The primary structure comprises 863 residues: Alanine--tRNA ligase (863 aa).

Zn(2+) is bound by residues His-552, His-556, Cys-654, and His-658.

Belongs to the class-II aminoacyl-tRNA synthetase family. Requires Zn(2+) as cofactor.

It is found in the cytoplasm. It carries out the reaction tRNA(Ala) + L-alanine + ATP = L-alanyl-tRNA(Ala) + AMP + diphosphate. In terms of biological role, catalyzes the attachment of alanine to tRNA(Ala) in a two-step reaction: alanine is first activated by ATP to form Ala-AMP and then transferred to the acceptor end of tRNA(Ala). Also edits incorrectly charged Ser-tRNA(Ala) and Gly-tRNA(Ala) via its editing domain. In Nitrosomonas europaea (strain ATCC 19718 / CIP 103999 / KCTC 2705 / NBRC 14298), this protein is Alanine--tRNA ligase.